The following is a 58-amino-acid chain: Small ribosomal subunit protein bS21 (58 aa).

Positions 24–58 (TKAGTLQEARKREHYEKPSVKRKRKSEAARKRKKI) are disordered. Residues 31–42 (EARKREHYEKPS) are compositionally biased toward basic and acidic residues. Positions 43–58 (VKRKRKSEAARKRKKI) are enriched in basic residues.

It belongs to the bacterial ribosomal protein bS21 family.

In Streptococcus thermophilus (strain CNRZ 1066), this protein is Small ribosomal subunit protein bS21.